The primary structure comprises 1370 residues: DNA-directed RNA polymerase subunit beta (1370 aa).

The protein belongs to the RNA polymerase beta chain family. As to quaternary structure, the RNAP catalytic core consists of 2 alpha, 1 beta, 1 beta' and 1 omega subunit. When a sigma factor is associated with the core the holoenzyme is formed, which can initiate transcription.

It carries out the reaction RNA(n) + a ribonucleoside 5'-triphosphate = RNA(n+1) + diphosphate. Its function is as follows. DNA-dependent RNA polymerase catalyzes the transcription of DNA into RNA using the four ribonucleoside triphosphates as substrates. This Bordetella petrii (strain ATCC BAA-461 / DSM 12804 / CCUG 43448) protein is DNA-directed RNA polymerase subunit beta.